The chain runs to 348 residues: Ion-translocating oxidoreductase complex subunit D (348 aa).

5 helical membrane-spanning segments follow: residues 15–35 (LTAK…GMQA), 36–56 (YFFG…AVAI), 67–87 (PTAF…LAIS), 88–108 (IPPY…LLLA), and 125–145 (VAYA…LVPI). T186 carries the FMN phosphoryl threonine modification. The next 5 helical transmembrane spans lie at 212-232 (LFAN…LLLI), 241-261 (IPAA…LLLP), 265-285 (LNVV…FIAT), 298-318 (LIFG…GNYP), and 320-340 (AVAF…HYTQ).

It belongs to the NqrB/RnfD family. The complex is composed of six subunits: RnfA, RnfB, RnfC, RnfD, RnfE and RnfG. FMN is required as a cofactor.

It is found in the cell inner membrane. Functionally, part of a membrane-bound complex that couples electron transfer with translocation of ions across the membrane. This chain is Ion-translocating oxidoreductase complex subunit D, found in Actinobacillus pleuropneumoniae serotype 5b (strain L20).